The sequence spans 335 residues: MATFVSELEAAKKNLSEALGDNVKQYWANLKLWFKQKISKEEFDLEAHRLLTQDNVHSHNDFLLAILTRCQILVSTPDGAGSLPWPGGSAAKPGKPKGKKKLSSVRQKFDHRFQPQNPLSGAQQFVAKDPQDDDDLKLCSHTMMLPTRGQLEGRMIVTAYEHGLDNVTEEAVSAVVYAVENHLKDILTSVVSRRKAYRLRDGHFKYAFGSNVTPQPYLKNSVVAYNNLIESPPAFTAPCAGQNPASHPPPDDAEQQAALLLACSGDTLPASLPPVNMYDLFEALQVHREVIPTHTVYALNIERIITKLWHPNHEELQQDKVHRQRLAAKEGLLLC.

Residues 83-103 (LPWPGGSAAKPGKPKGKKKLS) form a disordered region. Positions 84 to 93 (PWPGGSAAKP) are enriched in low complexity. Positions 94-103 (GKPKGKKKLS) are enriched in basic residues.

The protein belongs to the TADA1 family. Component of the STAGA transcription coactivator-HAT complex, at least composed of SUPT3H, GCN5L2, TAF5L, TAF6L, SUPT7L, TADA3L, TAD1L, TAF10, TAF12, TRRAP and TAF9.

The protein resides in the nucleus. Probably involved in transcriptional regulation. The protein is Transcriptional adapter 1 (TADA1) of Homo sapiens (Human).